A 308-amino-acid chain; its full sequence is Malonate utilization transcriptional regulator (308 aa).

The region spanning 9 to 66 (ITFRKLSVFMMFMAKGNIARTAEAMKLSSVSVHRALHTLEEGVGCPLFVHKGRNLLPL) is the HTH lysR-type domain. A DNA-binding region (H-T-H motif) is located at residues 26–45 (IARTAEAMKLSSVSVHRALH).

The protein belongs to the LysR transcriptional regulatory family.

Transcriptional regulator of the mau genes for malonate utilization. The sequence is that of Malonate utilization transcriptional regulator (mauR) from Klebsiella pneumoniae.